The sequence spans 70 residues: MMFRVTSVGCFLLVILSLNLVVLTNACLSEGSPCSMSGSCCHKSCCRSTCTFPCLIPGKRAKLREFFRQR.

Positions 1-26 (MMFRVTSVGCFLLVILSLNLVVLTNA) are cleaved as a signal peptide. 4 disulfides stabilise this stretch: C27/C41, C34/C46, C40/C50, and C45/C54. Proline amide is present on P57. Residues 61–70 (AKLREFFRQR) constitute a propeptide that is removed on maturation.

It belongs to the conotoxin I2 superfamily. As to expression, expressed by the venom duct.

Its subcellular location is the secreted. The chain is Conotoxin Ep11.12 from Conus episcopatus (Bishop's cone).